Reading from the N-terminus, the 251-residue chain is Triosephosphate isomerase (251 aa).

9 to 11 (NWK) is a binding site for substrate. Residue His-94 is the Electrophile of the active site. Glu-166 (proton acceptor) is an active-site residue. Residues Gly-172, Ser-211, and 232 to 233 (GG) contribute to the substrate site.

The protein belongs to the triosephosphate isomerase family. As to quaternary structure, homodimer.

Its subcellular location is the cytoplasm. It carries out the reaction D-glyceraldehyde 3-phosphate = dihydroxyacetone phosphate. It functions in the pathway carbohydrate biosynthesis; gluconeogenesis. Its pathway is carbohydrate degradation; glycolysis; D-glyceraldehyde 3-phosphate from glycerone phosphate: step 1/1. Involved in the gluconeogenesis. Catalyzes stereospecifically the conversion of dihydroxyacetone phosphate (DHAP) to D-glyceraldehyde-3-phosphate (G3P). This chain is Triosephosphate isomerase, found in Xanthomonas euvesicatoria pv. vesicatoria (strain 85-10) (Xanthomonas campestris pv. vesicatoria).